The sequence spans 214 residues: Orotate phosphoribosyltransferase (214 aa).

K26 contacts 5-phospho-alpha-D-ribose 1-diphosphate. 34–35 (FF) lines the orotate pocket. 5-phospho-alpha-D-ribose 1-diphosphate is bound by residues 72–73 (YK), R99, K100, K103, H105, and 124–132 (DDVITAGTA). The orotate site is built by T128 and R156.

This sequence belongs to the purine/pyrimidine phosphoribosyltransferase family. PyrE subfamily. Homodimer. Mg(2+) serves as cofactor.

The enzyme catalyses orotidine 5'-phosphate + diphosphate = orotate + 5-phospho-alpha-D-ribose 1-diphosphate. It participates in pyrimidine metabolism; UMP biosynthesis via de novo pathway; UMP from orotate: step 1/2. Its function is as follows. Catalyzes the transfer of a ribosyl phosphate group from 5-phosphoribose 1-diphosphate to orotate, leading to the formation of orotidine monophosphate (OMP). The sequence is that of Orotate phosphoribosyltransferase from Pasteurella multocida (strain Pm70).